Here is a 477-residue protein sequence, read N- to C-terminus: UDP-N-acetylmuramate--L-alanine ligase (477 aa).

An ATP-binding site is contributed by 122-128 (GTHGKTT).

Belongs to the MurCDEF family.

It is found in the cytoplasm. The enzyme catalyses UDP-N-acetyl-alpha-D-muramate + L-alanine + ATP = UDP-N-acetyl-alpha-D-muramoyl-L-alanine + ADP + phosphate + H(+). The protein operates within cell wall biogenesis; peptidoglycan biosynthesis. Its function is as follows. Cell wall formation. This Xanthomonas campestris pv. campestris (strain 8004) protein is UDP-N-acetylmuramate--L-alanine ligase.